A 785-amino-acid polypeptide reads, in one-letter code: DNA ligase (785 aa).

NAD(+) is bound by residues 32–36 (DAEYD), 81–82 (SL), and glutamate 121. Lysine 123 acts as the N6-AMP-lysine intermediate in catalysis. 4 residues coordinate NAD(+): arginine 144, glutamate 181, lysine 297, and lysine 321. Residues cysteine 415, cysteine 418, cysteine 445, and cysteine 451 each coordinate Zn(2+). The region spanning 702–785 (VEGLPLAGET…AFLKGHGISA (84 aa)) is the BRCT domain.

Belongs to the NAD-dependent DNA ligase family. LigA subfamily. Mg(2+) is required as a cofactor. It depends on Mn(2+) as a cofactor.

The enzyme catalyses NAD(+) + (deoxyribonucleotide)n-3'-hydroxyl + 5'-phospho-(deoxyribonucleotide)m = (deoxyribonucleotide)n+m + AMP + beta-nicotinamide D-nucleotide.. Its function is as follows. DNA ligase that catalyzes the formation of phosphodiester linkages between 5'-phosphoryl and 3'-hydroxyl groups in double-stranded DNA using NAD as a coenzyme and as the energy source for the reaction. It is essential for DNA replication and repair of damaged DNA. The sequence is that of DNA ligase from Pseudomonas fluorescens (strain Pf0-1).